The sequence spans 779 residues: Glucan endo-1,3-beta-D-glucosidase 2 (779 aa).

The interval 1 to 71 (MCYSRQAIPP…SNPLADSQVN (71 aa)) is disordered. Polar residues predominate over residues 57 to 71 (RTPSSSNPLADSQVN). Positions 73-309 (DNIFQSPVLS…NGLICQLSAD (237 aa)) are beta-sandwich subdomain. The 707-residue stretch at 73–779 (DNIFQSPVLS…WSLAYSGAFS (707 aa)) folds into the GH81 domain. The tract at residues 309–400 (DSVPSIDMAA…LTNSFDMQVQ (92 aa)) is alpha/beta subdomain. The segment at 375–779 (IASSLDSTVK…WSLAYSGAFS (405 aa)) is sufficient for catalytic activity. Residues 415–779 (NKKADYSQEK…WSLAYSGAFS (365 aa)) are (alpha/beta)6 barrel subdomain. Asp-526 is an active-site residue. (1,3-beta-D-glucosyl)n is bound by residues His-530, Asp-607, Glu-609, and Glu-613. Residues Glu-609 and Glu-613 contribute to the active site. Residues 678–680 (KID) are may provide specificity for triple-helical beta-glucan. Tyr-691 is a (1,3-beta-D-glucosyl)n binding site.

This sequence belongs to the glycosyl hydrolase 81 family.

It is found in the cytoplasm. The enzyme catalyses Hydrolysis of (1-&gt;3)-beta-D-glucosidic linkages in (1-&gt;3)-beta-D-glucans.. With respect to regulation, inhibited by mercury ions. Functionally, cleaves internal linkages in 1,3-beta-glucan. The sequence is that of Glucan endo-1,3-beta-D-glucosidase 2 from Saccharomyces cerevisiae (strain ATCC 204508 / S288c) (Baker's yeast).